Here is a 719-residue protein sequence, read N- to C-terminus: Polyphosphate kinase (719 aa).

Asn-47 contributes to the ATP binding site. Mg(2+) is bound by residues Arg-377 and Arg-407. His-437 (phosphohistidine intermediate) is an active-site residue. Residues Tyr-470, Arg-566, and His-594 each coordinate ATP.

This sequence belongs to the polyphosphate kinase 1 (PPK1) family. Mg(2+) serves as cofactor. An intermediate of this reaction is the autophosphorylated ppk in which a phosphate is covalently linked to a histidine residue through a N-P bond.

The catalysed reaction is [phosphate](n) + ATP = [phosphate](n+1) + ADP. In terms of biological role, catalyzes the reversible transfer of the terminal phosphate of ATP to form a long-chain polyphosphate (polyP). The polypeptide is Polyphosphate kinase (Exiguobacterium sibiricum (strain DSM 17290 / CCUG 55495 / CIP 109462 / JCM 13490 / 255-15)).